Consider the following 189-residue polypeptide: dCTP deaminase (189 aa).

DCTP is bound by residues 112-117 (KSTYAR), 136-138 (TLE), Gln-157, Tyr-171, and Gln-181. The Proton donor/acceptor role is filled by Glu-138.

It belongs to the dCTP deaminase family. As to quaternary structure, homotrimer.

It catalyses the reaction dCTP + H2O + H(+) = dUTP + NH4(+). It participates in pyrimidine metabolism; dUMP biosynthesis; dUMP from dCTP (dUTP route): step 1/2. Functionally, catalyzes the deamination of dCTP to dUTP. This chain is dCTP deaminase, found in Alcanivorax borkumensis (strain ATCC 700651 / DSM 11573 / NCIMB 13689 / SK2).